Reading from the N-terminus, the 356-residue chain is Holliday junction branch migration complex subunit RuvB (356 aa).

A compositionally biased stretch (polar residues) spans 1-14 (MAIVSSITNHSSLP). The tract at residues 1–20 (MAIVSSITNHSSLPNDKGEE) is disordered. The large ATPase domain (RuvB-L) stretch occupies residues 13–201 (LPNDKGEERL…FGITQRLDFY (189 aa)). The ATP site is built by leucine 40, arginine 41, glycine 82, lysine 85, threonine 86, threonine 87, arginine 191, tyrosine 201, and arginine 238. Threonine 86 serves as a coordination point for Mg(2+). The small ATPAse domain (RuvB-S) stretch occupies residues 202 to 273 (NYLDLENIIK…VVNDALDLHR (72 aa)). The tract at residues 276 to 356 (QRGLDATDRS…LLTSPNNIDK (81 aa)) is head domain (RuvB-H). Positions 331 and 336 each coordinate DNA.

The protein belongs to the RuvB family. In terms of assembly, homohexamer. Forms an RuvA(8)-RuvB(12)-Holliday junction (HJ) complex. HJ DNA is sandwiched between 2 RuvA tetramers; dsDNA enters through RuvA and exits via RuvB. An RuvB hexamer assembles on each DNA strand where it exits the tetramer. Each RuvB hexamer is contacted by two RuvA subunits (via domain III) on 2 adjacent RuvB subunits; this complex drives branch migration. In the full resolvosome a probable DNA-RuvA(4)-RuvB(12)-RuvC(2) complex forms which resolves the HJ.

It localises to the cytoplasm. The enzyme catalyses ATP + H2O = ADP + phosphate + H(+). Functionally, the RuvA-RuvB-RuvC complex processes Holliday junction (HJ) DNA during genetic recombination and DNA repair, while the RuvA-RuvB complex plays an important role in the rescue of blocked DNA replication forks via replication fork reversal (RFR). RuvA specifically binds to HJ cruciform DNA, conferring on it an open structure. The RuvB hexamer acts as an ATP-dependent pump, pulling dsDNA into and through the RuvAB complex. RuvB forms 2 homohexamers on either side of HJ DNA bound by 1 or 2 RuvA tetramers; 4 subunits per hexamer contact DNA at a time. Coordinated motions by a converter formed by DNA-disengaged RuvB subunits stimulates ATP hydrolysis and nucleotide exchange. Immobilization of the converter enables RuvB to convert the ATP-contained energy into a lever motion, pulling 2 nucleotides of DNA out of the RuvA tetramer per ATP hydrolyzed, thus driving DNA branch migration. The RuvB motors rotate together with the DNA substrate, which together with the progressing nucleotide cycle form the mechanistic basis for DNA recombination by continuous HJ branch migration. Branch migration allows RuvC to scan DNA until it finds its consensus sequence, where it cleaves and resolves cruciform DNA. This Prochlorococcus marinus (strain NATL2A) protein is Holliday junction branch migration complex subunit RuvB.